The sequence spans 173 residues: S-ribosylhomocysteine lyase (173 aa).

Fe cation-binding residues include H54, H58, and C128.

It belongs to the LuxS family. As to quaternary structure, homodimer. It depends on Fe cation as a cofactor.

The catalysed reaction is S-(5-deoxy-D-ribos-5-yl)-L-homocysteine = (S)-4,5-dihydroxypentane-2,3-dione + L-homocysteine. Its function is as follows. Involved in the synthesis of autoinducer 2 (AI-2) which is secreted by bacteria and is used to communicate both the cell density and the metabolic potential of the environment. The regulation of gene expression in response to changes in cell density is called quorum sensing. Catalyzes the transformation of S-ribosylhomocysteine (RHC) to homocysteine (HC) and 4,5-dihydroxy-2,3-pentadione (DPD). This Hydrogenovibrio crunogenus (strain DSM 25203 / XCL-2) (Thiomicrospira crunogena) protein is S-ribosylhomocysteine lyase.